A 529-amino-acid chain; its full sequence is Pre-rRNA-processing protein pro-1 (529 aa).

WD repeat units follow at residues 136-175 (AHYQNITKIVISDDDSMIFTASKDGAVHGYLVTDLVSADR) and 287-326 (GHSDEISRLAINTDGTLLASGDASGKYCIWEISSHQCLKV). A coiled-coil region spans residues 416–518 (ARNEAAKAEK…LKEINKQMYE (103 aa)). The disordered stretch occupies residues 436–470 (TLGDDEDDAPEVGNQRRKSGKKNKKNRKNQKKNDF). The segment covering 450–465 (QRRKSGKKNKKNRKNQ) has biased composition (basic residues).

Belongs to the WD repeat IPI3/WDR18 family. In terms of assembly, component of the PELP1 complex, composed of at least PELP1, TEX10 and WDR18. The complex interacts with pre-60S ribosome particles.

It localises to the nucleus. The protein localises to the nucleolus. It is found in the nucleoplasm. Component of the PELP1 complex involved in the nucleolar steps of 28S rRNA maturation and the subsequent nucleoplasmic transit of the pre-60S ribosomal subunit. Required for processing ITS2 sequences from rRNA intermediates during 26S rRNA maturation. Required in the soma to promote normal proliferation and prevent germline tumor formation. The chain is Pre-rRNA-processing protein pro-1 from Caenorhabditis elegans.